A 312-amino-acid polypeptide reads, in one-letter code: Glycerol-3-phosphate dehydrogenase [NAD(P)+] (312 aa).

NADPH contacts are provided by tryptophan 11, arginine 30, arginine 31, and lysine 95. Sn-glycerol 3-phosphate is bound by residues lysine 95, glycine 123, and serine 125. Position 127 (alanine 127) interacts with NADPH. Positions 177, 230, 240, 241, and 242 each coordinate sn-glycerol 3-phosphate. Catalysis depends on lysine 177, which acts as the Proton acceptor. Arginine 241 lines the NADPH pocket. The NADPH site is built by valine 265 and glutamate 267.

It belongs to the NAD-dependent glycerol-3-phosphate dehydrogenase family.

It localises to the cytoplasm. The catalysed reaction is sn-glycerol 3-phosphate + NAD(+) = dihydroxyacetone phosphate + NADH + H(+). The enzyme catalyses sn-glycerol 3-phosphate + NADP(+) = dihydroxyacetone phosphate + NADPH + H(+). Its pathway is membrane lipid metabolism; glycerophospholipid metabolism. In terms of biological role, catalyzes the reduction of the glycolytic intermediate dihydroxyacetone phosphate (DHAP) to sn-glycerol 3-phosphate (G3P), the key precursor for phospholipid synthesis. The polypeptide is Glycerol-3-phosphate dehydrogenase [NAD(P)+] (Helicobacter pylori (strain P12)).